The following is a 333-amino-acid chain: Ornithine carbamoyltransferase (333 aa).

Carbamoyl phosphate is bound by residues 57–60 (STRT), Q83, R107, and 134–137 (HPTQ). L-ornithine is bound by residues N168, D232, and 236–237 (SM). Carbamoyl phosphate-binding positions include 274-275 (CL) and R319.

Belongs to the aspartate/ornithine carbamoyltransferase superfamily. OTCase family.

The protein localises to the cytoplasm. The catalysed reaction is carbamoyl phosphate + L-ornithine = L-citrulline + phosphate + H(+). It functions in the pathway amino-acid biosynthesis; L-arginine biosynthesis; L-arginine from L-ornithine and carbamoyl phosphate: step 1/3. Its function is as follows. Reversibly catalyzes the transfer of the carbamoyl group from carbamoyl phosphate (CP) to the N(epsilon) atom of ornithine (ORN) to produce L-citrulline. The chain is Ornithine carbamoyltransferase from Photobacterium profundum (strain SS9).